The primary structure comprises 54 residues: Large ribosomal subunit protein bL33 (54 aa).

The protein belongs to the bacterial ribosomal protein bL33 family.

The polypeptide is Large ribosomal subunit protein bL33 (Parafrankia sp. (strain EAN1pec)).